We begin with the raw amino-acid sequence, 333 residues long: Probable tRNA-dihydrouridine synthase 1 (333 aa).

FMN contacts are provided by residues 17–19 (PMA) and Gln-71. The active-site Proton donor is Cys-102. Residues Lys-141, 202–204 (NGD), and 226–227 (GR) each bind FMN.

This sequence belongs to the Dus family. FMN serves as cofactor.

The enzyme catalyses a 5,6-dihydrouridine in tRNA + NAD(+) = a uridine in tRNA + NADH + H(+). It carries out the reaction a 5,6-dihydrouridine in tRNA + NADP(+) = a uridine in tRNA + NADPH + H(+). Its function is as follows. Catalyzes the synthesis of 5,6-dihydrouridine (D), a modified base found in the D-loop of most tRNAs, via the reduction of the C5-C6 double bond in target uridines. The sequence is that of Probable tRNA-dihydrouridine synthase 1 (dus1) from Bacillus subtilis (strain 168).